The sequence spans 623 residues: Kelch-like protein diablo (623 aa).

The segment at 1–54 is disordered; sequence MGDLPGSGSTAQPRDAAVTGTGGNSTAGGGSSVGSTAVDRPPSPARLSHTSEKH. Thr-19 bears the Phosphothreonine mark. A compositionally biased stretch (gly residues) spans 20-32; sequence GTGGNSTAGGGSS. The region spanning 72–139 is the BTB domain; the sequence is CDVVLNVGGR…CYTAHIIVEE (68 aa). The BACK domain occupies 174 to 276; the sequence is CLGIRAFADT…SPKFLVGTVG (103 aa). Kelch repeat units follow at residues 323 to 369, 371 to 417, 418 to 464, 466 to 511, 513 to 558, and 559 to 605; these read VLFA…VLND, LYAV…VLDG, FLYA…VLGG, LYAI…VFNN, IYAV…VVNG, and QLYA…VMRA.

The protein operates within protein modification; protein ubiquitination. In terms of biological role, probable substrate-specific adapter of an E3 ubiquitin-protein ligase complex which mediates the ubiquitination and subsequent proteasomal degradation of target proteins. May have a role in synapse differentiation and growth. The polypeptide is Kelch-like protein diablo (Drosophila melanogaster (Fruit fly)).